The primary structure comprises 64 residues: Alpha-conotoxin CnIL (64 aa).

Residues Met1–Ser21 form the signal peptide. Positions Phe22–Gly49 are excised as a propeptide. 2 disulfide bridges follow: Cys51–Cys56 and Cys52–Cys62. Cys62 is subject to Cysteine amide.

This sequence belongs to the conotoxin A superfamily. In terms of tissue distribution, expressed by the venom duct.

The protein resides in the secreted. The sequence is that of Alpha-conotoxin CnIL from Conus consors (Singed cone).